The chain runs to 203 residues: Histidine biosynthesis bifunctional protein HisIE (203 aa).

A phosphoribosyl-AMP cyclohydrolase region spans residues 1–114 (MLTEQQRREL…FGDTAHQWLF (114 aa)). The phosphoribosyl-ATP pyrophosphohydrolase stretch occupies residues 115–203 (LYQLEQLLAE…VIENLRKRHQ (89 aa)).

This sequence in the N-terminal section; belongs to the PRA-CH family. In the C-terminal section; belongs to the PRA-PH family.

It is found in the cytoplasm. The enzyme catalyses 1-(5-phospho-beta-D-ribosyl)-ATP + H2O = 1-(5-phospho-beta-D-ribosyl)-5'-AMP + diphosphate + H(+). It carries out the reaction 1-(5-phospho-beta-D-ribosyl)-5'-AMP + H2O = 1-(5-phospho-beta-D-ribosyl)-5-[(5-phospho-beta-D-ribosylamino)methylideneamino]imidazole-4-carboxamide. It functions in the pathway amino-acid biosynthesis; L-histidine biosynthesis; L-histidine from 5-phospho-alpha-D-ribose 1-diphosphate: step 2/9. Its pathway is amino-acid biosynthesis; L-histidine biosynthesis; L-histidine from 5-phospho-alpha-D-ribose 1-diphosphate: step 3/9. In Shigella sonnei (strain Ss046), this protein is Histidine biosynthesis bifunctional protein HisIE.